Here is a 538-residue protein sequence, read N- to C-terminus: Solute carrier family 2, facilitated glucose transporter member 9 (538 aa).

Topologically, residues 1–34 (MDSRELALASLMCDTGGPGELSVGHQQRRTKKWS) are cytoplasmic. The residue at position 3 (serine 3) is a Phosphoserine. A helical transmembrane segment spans residues 35-54 (FSLVVAALVGAFGSSFLYGY). N-linked (GlcNAc...) asparagine glycans are attached at residues asparagine 55 and asparagine 71. The Extracellular portion of the chain corresponds to 55 to 88 (NLSVVNAPTPYIKAFYNGTWYRRHGQPIDPDTLT). A helical membrane pass occupies residues 89-109 (LLWSVTVSIFAIGGLVGTLMV). The Cytoplasmic portion of the chain corresponds to 110-120 (KMIGKFLGRKS). Residues 121-143 (TLLVNNGFAISAALLMACSLRAG) form a helical membrane-spanning segment. Residues 144-148 (TFEML) lie on the Extracellular side of the membrane. Residues 149-170 (IVGRFIMGVDGGIALSALPMYL) traverse the membrane as a helical segment. The Cytoplasmic segment spans residues 171–181 (NEISPKEIRGS). A helical transmembrane segment spans residues 182–200 (LGQVTAIFICIGVFSGQLL). At 201 to 211 (GLPELLGREST) the chain is on the extracellular side. Residues 212–233 (WPYLFGVIIVPALVQLASLPFL) traverse the membrane as a helical segment. Over 234-297 (PESPRYLLFE…LLRAPFVRWQ (64 aa)) the chain is Cytoplasmic. Residues 298–319 (VITVIITMASYQLCGLNAIWFY) traverse the membrane as a helical segment. Residues 320–333 (TNSIFGKAGIPQDK) lie on the Extracellular side of the membrane. The helical transmembrane segment at 334-356 (IPYITLSTGGIETLAAIFSGLVI) threads the bilayer. The Cytoplasmic portion of the chain corresponds to 357–362 (ERLGRR). The chain crosses the membrane as a helical span at residues 363-385 (PLLIGGFGLMALFFGTLTATLTL). The Extracellular segment spans residues 386–390 (QDQAP). Residues 391–418 (WVPYLSIVCILAIIASFCSGPGGIPFIL) traverse the membrane as a helical segment. The Cytoplasmic segment spans residues 419-429 (TGEFFQQSERP). A helical transmembrane segment spans residues 430–453 (AAFMIAGTVNWLSNFAVGLLFPFI). Residues 454–458 (QKSLD) lie on the Extracellular side of the membrane. A helical transmembrane segment spans residues 459–480 (SYCFLVFATICIAGATYFYFVL). Residues 481 to 538 (PETKNRTHAEISQAFAKRNKAQPPEVKADSAMTEEKANSQTEPDSSSTLDSYGQNKIV) lie on the Cytoplasmic side of the membrane. Residues 495–538 (FAKRNKAQPPEVKADSAMTEEKANSQTEPDSSSTLDSYGQNKIV) form a disordered region. Positions 518-538 (NSQTEPDSSSTLDSYGQNKIV) are enriched in polar residues.

This sequence belongs to the major facilitator superfamily. Sugar transporter (TC 2.A.1.1) family. Post-translationally, N-glycosylated. As to expression, highly expressed in the intestine, with high expression in the jejunum and ileum, the segments of the intestine that perform the majority of urate excretion. Isoform 1: Widely expressed. Isoform 1: In kidney, expressed at low levels in proximal tubules. Isoform 2: Primarily expressed in liver and kidney; with specific expression in distal convoluted and connecting tubules of kidney.

It is found in the basolateral cell membrane. The protein resides in the apical cell membrane. The enzyme catalyses urate(out) = urate(in). Functionally, high-capacity urate transporter, which may play a role in the urate reabsorption by proximal tubules. May have a residual high-affinity, low-capacity glucose and fructose transporter activity. Transports urate at rates 45- to 60-fold faster than glucose. Does not transport galactose. May mediate small uptake of adenine but not of other nucleobases. The polypeptide is Solute carrier family 2, facilitated glucose transporter member 9 (Mus musculus (Mouse)).